A 308-amino-acid polypeptide reads, in one-letter code: D-alanine--D-alanine ligase (308 aa).

The ATP-grasp domain maps to 102 to 302 (KHVAKAAGIP…FGEFLRWMVE (201 aa)). Position 128–183 (128–183 (PMKPPYVVKPVREGSSFGVVIVKEDQSHPPQVITSSEWRYGDRVMVERYIAGREFT)) interacts with ATP. Mg(2+) contacts are provided by Asp-252, Glu-269, and Asn-271.

The protein belongs to the D-alanine--D-alanine ligase family. Mg(2+) is required as a cofactor. Requires Mn(2+) as cofactor.

It is found in the cytoplasm. It carries out the reaction 2 D-alanine + ATP = D-alanyl-D-alanine + ADP + phosphate + H(+). It functions in the pathway cell wall biogenesis; peptidoglycan biosynthesis. Functionally, cell wall formation. The protein is D-alanine--D-alanine ligase of Rhizobium meliloti (strain 1021) (Ensifer meliloti).